The chain runs to 268 residues: Hydroxypyruvate/pyruvate aldolase (268 aa).

The Proton acceptor role is filled by histidine 48. Residues glutamate 152 and aspartate 178 each coordinate a divalent metal cation.

This sequence belongs to the HpcH/HpaI aldolase family. Mn(2+) serves as cofactor. Mg(2+) is required as a cofactor. Requires Co(2+) as cofactor.

The catalysed reaction is D-glyceraldehyde + 3-hydroxypyruvate = (3R,4S,5R)-3,4,5,6-tetrahydroxy-2-oxohexanoate. The enzyme catalyses D-glyceraldehyde + 3-hydroxypyruvate = 2-dehydro-D-gluconate. It carries out the reaction D-glyceraldehyde + 3-hydroxypyruvate = 2-dehydro-D-galactonate. It catalyses the reaction D-glyceraldehyde + pyruvate = 2-dehydro-3-deoxy-L-galactonate. The catalysed reaction is 2-dehydro-3-deoxy-D-gluconate = D-glyceraldehyde + pyruvate. Aldolase which can catalyze in vitro the aldolisation reaction between hydroxypyruvate (HPA) or pyruvate (PA) and D-glyceraldehyde (D-GA). The condensation of hydroxypyruvate and D-glyceraldehyde produces (3R,4S,5R)-3,4,5,6-tetrahydroxy-2-oxohexanoate as the major product, 2-dehydro-D-gluconate and 2-dehydro-D-galactonate. The condensation of pyruvate and D-glyceraldehyde produces 2-dehydro-3-deoxy-L-galactonate as the major product and 2-dehydro-3-deoxy-D-gluconate. Also catalyzes the retro-aldol type decarboxylation of oxaloacetate, a general property of known pyruvate aldolases. This is Hydroxypyruvate/pyruvate aldolase from Pseudomonas aeruginosa.